A 376-amino-acid chain; its full sequence is 26S proteasome non-ATPase regulatory subunit 13 (376 aa).

The PCI domain maps to 171–338 (SYYKDALRFL…KRVHMTWVQP (168 aa)). N6-acetyllysine is present on Lys-298.

This sequence belongs to the proteasome subunit S11 family. Component of the 19S proteasome regulatory particle complex. The 26S proteasome consists of a 20S core particle (CP) and two 19S regulatory subunits (RP). The regulatory particle is made of a lid composed of 9 subunits including PSMD13, a base containing 6 ATPases and few additional components.

Its function is as follows. Component of the 26S proteasome, a multiprotein complex involved in the ATP-dependent degradation of ubiquitinated proteins. This complex plays a key role in the maintenance of protein homeostasis by removing misfolded or damaged proteins, which could impair cellular functions, and by removing proteins whose functions are no longer required. Therefore, the proteasome participates in numerous cellular processes, including cell cycle progression, apoptosis, or DNA damage repair. The sequence is that of 26S proteasome non-ATPase regulatory subunit 13 from Rattus norvegicus (Rat).